A 165-amino-acid polypeptide reads, in one-letter code: NADPH-dependent 7-cyano-7-deazaguanine reductase (165 aa).

Residue C56 is the Thioimide intermediate of the active site. The Proton donor role is filled by D63. Residues 78 to 80 (VES) and 97 to 98 (HE) contribute to the substrate site.

The protein belongs to the GTP cyclohydrolase I family. QueF type 1 subfamily.

It is found in the cytoplasm. It carries out the reaction 7-aminomethyl-7-carbaguanine + 2 NADP(+) = 7-cyano-7-deazaguanine + 2 NADPH + 3 H(+). The protein operates within tRNA modification; tRNA-queuosine biosynthesis. Its function is as follows. Catalyzes the NADPH-dependent reduction of 7-cyano-7-deazaguanine (preQ0) to 7-aminomethyl-7-deazaguanine (preQ1). This is NADPH-dependent 7-cyano-7-deazaguanine reductase from Oceanobacillus iheyensis (strain DSM 14371 / CIP 107618 / JCM 11309 / KCTC 3954 / HTE831).